Consider the following 255-residue polypeptide: Ribonuclease HII (255 aa).

An RNase H type-2 domain is found at 72 to 255; that stretch reads QYIAGIDEAG…RSFAPVKAHE (184 aa). A divalent metal cation contacts are provided by Asp78, Glu79, and Asp170.

This sequence belongs to the RNase HII family. Mn(2+) is required as a cofactor. The cofactor is Mg(2+).

It is found in the cytoplasm. The catalysed reaction is Endonucleolytic cleavage to 5'-phosphomonoester.. In terms of biological role, endonuclease that specifically degrades the RNA of RNA-DNA hybrids. This Bacillus licheniformis (strain ATCC 14580 / DSM 13 / JCM 2505 / CCUG 7422 / NBRC 12200 / NCIMB 9375 / NCTC 10341 / NRRL NRS-1264 / Gibson 46) protein is Ribonuclease HII.